The following is a 199-amino-acid chain: Acireductone dioxygenase 1 (199 aa).

Residues His99, His101, Glu105, and His144 each coordinate Fe(2+). Positions 99, 101, 105, and 144 each coordinate Ni(2+).

Belongs to the acireductone dioxygenase (ARD) family. It depends on Fe(2+) as a cofactor. The cofactor is Ni(2+).

Its subcellular location is the cytoplasm. It is found in the nucleus. It carries out the reaction 1,2-dihydroxy-5-(methylsulfanyl)pent-1-en-3-one + O2 = 4-methylsulfanyl-2-oxobutanoate + formate + 2 H(+). It catalyses the reaction 1,2-dihydroxy-5-(methylsulfanyl)pent-1-en-3-one + O2 = 3-(methylsulfanyl)propanoate + CO + formate + 2 H(+). It participates in amino-acid biosynthesis; L-methionine biosynthesis via salvage pathway; L-methionine from S-methyl-5-thio-alpha-D-ribose 1-phosphate: step 5/6. In terms of biological role, catalyzes 2 different reactions between oxygen and the acireductone 1,2-dihydroxy-3-keto-5-methylthiopentene (DHK-MTPene) depending upon the metal bound in the active site. Fe-containing acireductone dioxygenase (Fe-ARD) produces formate and 2-keto-4-methylthiobutyrate (KMTB), the alpha-ketoacid precursor of methionine in the methionine recycle pathway. Ni-containing acireductone dioxygenase (Ni-ARD) produces methylthiopropionate, carbon monoxide and formate, and does not lie on the methionine recycle pathway. This chain is Acireductone dioxygenase 1 (ARD1), found in Arabidopsis thaliana (Mouse-ear cress).